We begin with the raw amino-acid sequence, 209 residues long: MNSIKNHLMCEEIHKRFHLHPKVRKAMESIEREVFVPAPFKHFAYTLNALSMQAQQYISSPLTVAKMTQYLEIDHVDSVLEIGCGSGYQAAVLSQIFRRVFSVERIESLYLEARLRLKNLGLDNVHVKFADGNKGWEQYAPYDRILFSACAKNIPQALIDQLEEGGILVAPIQENNEQVIKRFVKQNNALRVQKVLEKCSFVPVIDGVQ.

The active site involves serine 59.

Belongs to the methyltransferase superfamily. L-isoaspartyl/D-aspartyl protein methyltransferase family.

The protein localises to the cytoplasm. It catalyses the reaction [protein]-L-isoaspartate + S-adenosyl-L-methionine = [protein]-L-isoaspartate alpha-methyl ester + S-adenosyl-L-homocysteine. Functionally, catalyzes the methyl esterification of L-isoaspartyl residues in peptides and proteins that result from spontaneous decomposition of normal L-aspartyl and L-asparaginyl residues. It plays a role in the repair and/or degradation of damaged proteins. In Helicobacter pylori (strain G27), this protein is Protein-L-isoaspartate O-methyltransferase.